The chain runs to 511 residues: Endoglucanase B (511 aa).

Positions 1–29 (MNLLSGWVRPLMLGCGLLGAALSAGSIQA) are cleaved as a signal peptide. Residues 30–130 (AVCEYRVTNE…AVTGAICGGQ (101 aa)) enclose the CBM2 domain. Cysteines 32 and 127 form a disulfide. The segment at 137 to 173 (SVASSSSSSSVVSSTPRSSSSSVSSSVPGTSSSSSSS) is disordered. Residues 180 to 209 (ACNWYGTLTPLCNNTSNGWGYEDGRSCVAR) enclose the CBM10 domain. Intrachain disulfides connect Cys-181/Cys-212 and Cys-191/Cys-206. Catalysis depends on Asp-276, which acts as the Nucleophile. The active-site Proton donor is Asp-393.

This sequence belongs to the glycosyl hydrolase 45 (cellulase K) family.

The protein localises to the periplasm. It catalyses the reaction Endohydrolysis of (1-&gt;4)-beta-D-glucosidic linkages in cellulose, lichenin and cereal beta-D-glucans.. In terms of biological role, this enzyme catalyzes the endohydrolysis of 1,4-beta-glucosidic linkages in cellulose, lichenin and cereal beta-D-glucans. EGB is most active against barley beta-glucan, but showed significant activity against amorphous and crystalline cellulose. This chain is Endoglucanase B (celB), found in Cellvibrio japonicus (strain Ueda107) (Pseudomonas fluorescens subsp. cellulosa).